The sequence spans 170 residues: ATP synthase subunit b (170 aa).

The helical transmembrane segment at 11-31 (AFTFGDAFFTLFAFAILLVLI) threads the bilayer.

The protein belongs to the ATPase B chain family. F-type ATPases have 2 components, F(1) - the catalytic core - and F(0) - the membrane proton channel. F(1) has five subunits: alpha(3), beta(3), gamma(1), delta(1), epsilon(1). F(0) has three main subunits: a(1), b(2) and c(10-14). The alpha and beta chains form an alternating ring which encloses part of the gamma chain. F(1) is attached to F(0) by a central stalk formed by the gamma and epsilon chains, while a peripheral stalk is formed by the delta and b chains.

The protein localises to the cell membrane. F(1)F(0) ATP synthase produces ATP from ADP in the presence of a proton or sodium gradient. F-type ATPases consist of two structural domains, F(1) containing the extramembraneous catalytic core and F(0) containing the membrane proton channel, linked together by a central stalk and a peripheral stalk. During catalysis, ATP synthesis in the catalytic domain of F(1) is coupled via a rotary mechanism of the central stalk subunits to proton translocation. Its function is as follows. Component of the F(0) channel, it forms part of the peripheral stalk, linking F(1) to F(0). In Listeria innocua serovar 6a (strain ATCC BAA-680 / CLIP 11262), this protein is ATP synthase subunit b.